The following is a 651-amino-acid chain: Beta-glucuronidase (651 aa).

The signal sequence occupies residues 1-22 (MLRGPAAVWAALGPLLWACGLA). N-linked (GlcNAc...) asparagine glycans are attached at residues Asn-172 and Asn-419. Catalysis depends on Glu-450, which acts as the Proton donor. N-linked (GlcNAc...) asparagine glycosylation occurs at Asn-630.

This sequence belongs to the glycosyl hydrolase 2 family. In terms of assembly, homotetramer.

It is found in the lysosome. The catalysed reaction is a beta-D-glucuronoside + H2O = D-glucuronate + an alcohol. Inhibited by L-aspartic acid. Plays an important role in the degradation of dermatan and keratan sulfates. This Felis catus (Cat) protein is Beta-glucuronidase (GUSB).